The chain runs to 821 residues: Spindle apparatus protein lin-5 (821 aa).

The segment at 161–199 is disordered; sequence EASSGFRTPKRNNYSLTSLQTPTATARRLRTASSTARRS. Positions 162 to 180 are enriched in polar residues; it reads ASSGFRTPKRNNYSLTSLQ. Positions 181–199 are enriched in low complexity; it reads TPTATARRLRTASSTARRS. Positions 211–634 form a coiled coil; sequence KFMRSERELK…REKESAEIKK (424 aa). Disordered regions lie at residues 736-758 and 779-821; these read RSES…FTPS and LKCS…SKKQ.

As to quaternary structure, interacts with gpr-1; gpr-1 forms a complex with gpr-2 and GDP-bound goa-1.

It localises to the cytoplasm. The protein localises to the cell cortex. The protein resides in the cytoskeleton. Its subcellular location is the spindle. It is found in the chromosome. It localises to the centromere. The protein localises to the kinetochore. The protein resides in the microtubule organizing center. Its subcellular location is the centrosome. Functionally, essential component of the spindle apparatus required for spindle positioning and chromosome movement. Acts to recruit or anchor gpr-1/gpr-2 complex to the spindle and cortex. Also involved, directly or indirectly, in cytokinesis and in the coupling of DNA replication, centrosome duplication and mitotic division. The polypeptide is Spindle apparatus protein lin-5 (lin-5) (Caenorhabditis elegans).